A 911-amino-acid polypeptide reads, in one-letter code: Protein SOSEKI (911 aa).

Positions T15 to T107 are DIX-like oligomerization domain. Disordered stretches follow at residues S219–E470 and L492–I810. Basic and acidic residues-rich tracts occupy residues T253–R286 and E295–P407. Polar residues predominate over residues S414–S423. Residues S452–T467 show a composition bias toward low complexity. Residues C493–G494 carry the Association to cell membranes motif. Low complexity predominate over residues P511 to P527. The span at S591–N607 shows a compositional bias: polar residues. The segment covering S608–V662 has biased composition (low complexity). Over residues I663–T683 the composition is skewed to polar residues. The span at S696–S709 shows a compositional bias: basic and acidic residues. The span at P722–F733 shows a compositional bias: polar residues. Residues K735 to K771 show a composition bias toward basic and acidic residues. A compositionally biased stretch (low complexity) spans T772 to T784. Over residues P785–R805 the composition is skewed to polar residues. A C2HC/C3H-type zinc finger spans residues I864–S893. Residues C868, C871, H883, and C887 each contribute to the Zn(2+) site.

This sequence belongs to the SOSEKI family. In terms of assembly, homodimer. Forms long polymer filaments with other SOKs proteins polymers crucial for polar localization and biological activity. Zn(2+) is required as a cofactor.

The protein resides in the cell membrane. Functionally, SOSEKI proteins locally interpret global polarity cues and can influence cell division orientation to coordinate cell polarization relative to body axes. The polypeptide is Protein SOSEKI (Marchantia polymorpha (Common liverwort)).